The following is a 345-amino-acid chain: Ferrochelatase (345 aa).

H215 and E296 together coordinate Fe cation.

This sequence belongs to the ferrochelatase family.

Its subcellular location is the cytoplasm. The enzyme catalyses heme b + 2 H(+) = protoporphyrin IX + Fe(2+). It participates in porphyrin-containing compound metabolism; protoheme biosynthesis; protoheme from protoporphyrin-IX: step 1/1. Its function is as follows. Catalyzes the ferrous insertion into protoporphyrin IX. This Rhodopseudomonas palustris (strain HaA2) protein is Ferrochelatase.